Here is a 287-residue protein sequence, read N- to C-terminus: Putative inactive carboxylesterase 4 (287 aa).

An N-terminal signal peptide occupies residues 1-18 (MWLPALVLATLAASAAWA). Asparagine 80 is a glycosylation site (N-linked (GlcNAc...) asparagine).

Belongs to the type-B carboxylesterase/lipase family. As to expression, expressed in placenta.

Its subcellular location is the secreted. In terms of biological role, has no esterase activity. In Homo sapiens (Human), this protein is Putative inactive carboxylesterase 4 (CES1P1).